A 1912-amino-acid chain; its full sequence is Methylcytosine dioxygenase TET2 (1912 aa).

A compositionally biased stretch (basic and acidic residues) spans 1-11; the sequence is MEQDRTTHAEG. The segment at 1–86 is disordered; sequence MEQDRTTHAE…PHEDRGYSRC (86 aa). Phosphoserine is present on residues Ser15 and Ser23. The span at 53–74 shows a compositional bias: polar residues; the sequence is TKWQSSQSCYGISHMKGSQSSH. Residues Ser76 and Ser97 each carry the phosphoserine modification. Disordered regions lie at residues 112-166, 340-359, 367-388, 429-470, 673-723, 832-862, 907-966, and 1009-1052; these read LDQK…FPTR, DRNLQASHGSSEQYSKQKET, SSKFPKDSISPTTVTPPSQSLL, IDHQ…PEKS, PQTQ…DKQR, EQAQKPQQASSLQGLKDRSQGESPAPPAEAA, QEQQ…NGQP, and ESEN…EGCN. Polar residues-rich tracts occupy residues 135-158, 340-353, 367-387, 434-447, and 673-689; these read SRQPNVSGLSDNGEPVTSTTQESS, DRNLQASHGSSEQY, SSKFPKDSISPTTVTPPSQSL, KTSSSQSLNPSVHT, and PQTQASQTPASQNSNFP. A compositionally biased stretch (low complexity) spans 690-701; sequence QICQQQQQQQLQ. 2 stretches are compositionally biased toward polar residues: residues 707 to 719 and 832 to 844; these read QMPQTFSHLQGSN and EQAQKPQQASSLQ. Residues 907 to 921 are compositionally biased toward low complexity; the sequence is QEQQQTQQSQPGHNQ. Composition is skewed to polar residues over residues 944 to 966 and 1036 to 1046; these read PQENMSSRIKQEISSPSRDNGQP and SDTPGEQSQNG. Ser1036 is subject to Phosphoserine. The Zn(2+) site is built by Cys1048, Cys1106, His1132, and Cys1134. A 2-oxoglutarate-binding site is contributed by Arg1174. The Zn(2+) site is built by Cys1184, Cys1186, Cys1202, and Cys1211. An interaction with DNA region spans residues 1203 to 1216; sequence SWSMYYNGCKFARS. Lys1212 is covalently cross-linked (Glycyl lysine isopeptide (Lys-Gly) (interchain with G-Cter in ubiquitin)). Position 1271 (Cys1271) interacts with Zn(2+). 2-oxoglutarate is bound at residue Cys1287. His1293 contributes to the Zn(2+) binding site. His1295 and Asp1297 together coordinate Fe cation. Asn1300 serves as a coordination point for substrate. Residue His1329 coordinates 2-oxoglutarate. 2 disordered regions span residues 1379 to 1414 and 1444 to 1514; these read KKKAEPKKAKTKKAARKRSSLENCSSRTEKGKSSSH and LQRH…HTSD. The span at 1387–1396 shows a compositional bias: basic residues; the sequence is AKTKKAARKR. The segment covering 1456–1473 has biased composition (pro residues); the sequence is QPQPPQPQPQTTPQPQPQ. The segment covering 1480 to 1512 has biased composition (polar residues); that stretch reads GNSQSVGSHCSGSTSVYTRQPTPHSPYPSSAHT. His1795 contributes to the Fe cation binding site. 1810-1812 provides a ligand contact to 2-oxoglutarate; that stretch reads RIS. 1816–1818 contacts substrate; the sequence is YRH. A Zn(2+)-binding site is contributed by His1826. The segment covering 1842 to 1866 has biased composition (basic and acidic residues); the sequence is EEECGKNGSDHVSQKNHGKQEKREP. The tract at residues 1842-1871 is disordered; that stretch reads EEECGKNGSDHVSQKNHGKQEKREPTGPQE.

The protein belongs to the TET family. As to quaternary structure, interacts with HCFC1. Interacts with OGT. Interacts with PROSER1; this interaction mediates TET2 O-GlcNAcylation and stability by promoting the interaction between OGT and TET2. Directly interacts (via C-terminus) with the DCAF1 component of the CRL4(VprBP) E3 ubiquitin-protein ligase complex. It depends on Fe(2+) as a cofactor. Zn(2+) is required as a cofactor. Post-translationally, may be glycosylated. It is unclear whether interaction with OGT leads to GlcNAcylation. According to a report, it is GlcNAcylated by OGT. In contrast, another group reports no GlcNAcylation by OGT in human ortholog. In terms of processing, monoubiquitinated at Lys-1212 by the DCX (DDB1-CUL4-X-box) E3 ubiquitin-protein ligase complex called CRL4(VprBP) or CUL4A-RBX1-DDB1-DCAF1/VPRBP complex; this modification promotes binding to DNA. Acetylated. As to expression, expressed in the brain, kidney, heart, lung, muscle and stomach. Expressed in germinal vesicle (GV) stage and MII-stage oocytes and in early embryos. Present in embryonic stem cells (ES cells).

Its subcellular location is the nucleus. It is found in the chromosome. It carries out the reaction a 5-methyl-2'-deoxycytidine in DNA + 2-oxoglutarate + O2 = a 5-hydroxymethyl-2'-deoxycytidine in DNA + succinate + CO2. It catalyses the reaction a 5-hydroxymethyl-2'-deoxycytidine in DNA + 2-oxoglutarate + O2 = a 5-formyl-2'-deoxycytidine in DNA + succinate + CO2 + H2O. The enzyme catalyses a 5-formyl-2'-deoxycytidine in DNA + 2-oxoglutarate + O2 = a 5-carboxyl-2'-deoxycytidine in DNA + succinate + CO2 + H(+). Its function is as follows. Dioxygenase that catalyzes the conversion of the modified genomic base 5-methylcytosine (5mC) into 5-hydroxymethylcytosine (5hmC) and plays a key role in active DNA demethylation. Has a preference for 5-hydroxymethylcytosine in CpG motifs. Also mediates subsequent conversion of 5hmC into 5-formylcytosine (5fC), and conversion of 5fC to 5-carboxylcytosine (5caC). Conversion of 5mC into 5hmC, 5fC and 5caC probably constitutes the first step in cytosine demethylation. Methylation at the C5 position of cytosine bases is an epigenetic modification of the mammalian genome which plays an important role in transcriptional regulation. In addition to its role in DNA demethylation, also involved in the recruitment of the O-GlcNAc transferase OGT to CpG-rich transcription start sites of active genes, thereby promoting histone H2B GlcNAcylation by OGT. This Mus musculus (Mouse) protein is Methylcytosine dioxygenase TET2 (Tet2).